The primary structure comprises 649 residues: MSLVHNQTNLNESKFLIERAFSSSSETVPLSKEATYPMPTAYSFSAVRSNSETNIKRENPQGFAKEPIMTSMLHNLTMSTGKGNGNDVNSLAPHDVDVGPYCLLLRNLPKDITLRECYCIFSLATGVSSIELKRDDREPFNDNEKVVVVKFGSLSLVTHYANILNSKSEIFGPSFPFRSHIDVVNEQTQLPVSFQEHVSSGTTNSSPKNYQLSSSAQNEIQNQSFNTISYGKTSSSPLGPSAAKPRPSLLSERSLRFSFNDPFGLETISQRKESVPFLRNSISQHDLSNVTTTPVPAGMPPQKDAGKSLLLLEKDEINESIWNGDELVNDVGNSSFGASLQEPPMSSTPVMEWNASSTANIPLFQLSSQENHQSNLLPPSHHSISQDVPHIQSQPNLNNSGVIHSATSLPHYHLLNQINASTKTQSIQQSVSNVPSNLDLNLQTENGHPQSSAPNGSSIFNNQKVNQGFLVSEQDTSTISRQKECSSTASASAFSKNNETNVAGSTTISQADLSLLAKVPPPANPADQNPPCNTLYVGNLPPDATEQELRQLFSNQQGFRRLSFRNKMNSHGHGNGHGHGPICFVEFEDVSFATRALAELYGSQLPHPRPSLNNKGGIRLSFSKNPLGVRGSNSRSKSGYSFNGSYGKS.

A phosphoserine mark is found at Ser-22 and Ser-206. Disordered stretches follow at residues 196-217 (EHVS…SSAQ) and 228-247 (ISYG…KPRP). Over residues 228–238 (ISYGKTSSSPL) the composition is skewed to polar residues. 2 positions are modified to phosphoserine: Ser-258 and Ser-283. Disordered stretches follow at residues 438–461 (LDLN…SIFN) and 604–649 (QLPH…YGKS). The 93-residue stretch at 533–625 (NTLYVGNLPP…GGIRLSFSKN (93 aa)) folds into the RRM domain. Polar residues predominate over residues 631–649 (GSNSRSKSGYSFNGSYGKS).

Phosphorylated by PKA in vitro.

Its subcellular location is the cytoplasm. Its function is as follows. Has a partially redundant function to WHI3, a dosage-dependent modulator of cell size. The sequence is that of Protein WHI4 (WHI4) from Saccharomyces cerevisiae (strain ATCC 204508 / S288c) (Baker's yeast).